The following is a 574-amino-acid chain: MDVRRRPVKPLYPSEHISSGEPLKPHNQDSSVKASDALPLPLYLTNGLFFTMFFSVMYFLLHRWREKIRNGIPLHVLNFSELVAMVSLIASVIYLLGFFGIGFVQSFVSKGNNDSWDVEDESPEQFIDRTVTPPPVRRNIPMKSVPVAEKTAQIITPFSSEDDEVVIKSVVEGRIPSYSLESKLGDCKRAAFIRKEALQRSSGKSLEGLPLDGFDYESILGQCCEMPIGYIQIPVGIAGPLLLNGKEFSVPMATTEGCLVASTNRGCKAIYVSGGATSVLFRDAMTRAPVVRFGSAKRAAELKFFVEDPMNFETLSVVFNKSSRFARLQNIQCAIAGKNLYMRFSCSTGDAMGMNMVSKGVQNVLDYLQNEYPDMDIIGISGNYCSDKKPAAVNWIEGRGKSVVCEAIIKEDVVKKVLKTEVATLVELNMLKNLTGSAMAGALGGFNAHASNIVSAVYLATGQDPAQNIESSHCITMMEAVNDGKDLHISVTMPSIEVGTVGGGTQLASQSACLNLLGVKGANREAPGSNARLLATIVAGSVLAGELSLMSAISAGQLVKSHMKYNRSCKDVTK.

The disordered stretch occupies residues 1–30; sequence MDVRRRPVKPLYPSEHISSGEPLKPHNQDS. The helical transmembrane segment at 41 to 61 threads the bilayer; the sequence is PLYLTNGLFFTMFFSVMYFLL. Asn-78 carries an N-linked (GlcNAc...) asparagine glycan. A helical membrane pass occupies residues 83-103; that stretch reads VAMVSLIASVIYLLGFFGIGF. The linker stretch occupies residues 104–161; the sequence is VQSFVSKGNNDSWDVEDESPEQFIDRTVTPPPVRRNIPMKSVPVAEKTAQIITPFSSE. A glycan (N-linked (GlcNAc...) asparagine) is linked at Asn-113. The segment at 162–574 is catalytic; that stretch reads DDEVVIKSVV…YNRSCKDVTK (413 aa). Glu-256 (charge relay system) is an active-site residue. A glycan (N-linked (GlcNAc...) asparagine) is linked at Asn-320. Catalysis depends on Lys-388, which acts as the Charge relay system. The N-linked (GlcNAc...) asparagine glycan is linked to Asn-433. Asp-464 functions as the Charge relay system in the catalytic mechanism. Residue His-562 is the Proton donor of the active site. Residue Asn-566 is glycosylated (N-linked (GlcNAc...) asparagine).

It belongs to the HMG-CoA reductase family. As to expression, expressed in mature petals and anthers.

The protein localises to the endoplasmic reticulum membrane. It carries out the reaction (R)-mevalonate + 2 NADP(+) + CoA = (3S)-3-hydroxy-3-methylglutaryl-CoA + 2 NADPH + 2 H(+). Its pathway is metabolic intermediate biosynthesis; (R)-mevalonate biosynthesis; (R)-mevalonate from acetyl-CoA: step 3/3. Its function is as follows. Catalyzes the synthesis of mevalonate. The specific precursor of all isoprenoid compounds present in plants. This chain is 3-hydroxy-3-methylglutaryl-coenzyme A reductase 3 (HMG3), found in Solanum tuberosum (Potato).